We begin with the raw amino-acid sequence, 424 residues long: ATP-sensitive inward rectifier potassium channel 8 (424 aa).

The Cytoplasmic segment spans residues 1–69 (MLARKSIIPE…IFTTLVDLKW (69 aa)). The residue at position 6 (Ser-6) is a Phosphoserine. A helical membrane pass occupies residues 70–94 (RHTLVIFTMSFLCSWLLFAIMWWLV). Over 95-126 (AFAHGDIYAYMEKGTMEKSGLESAVCVTNVRS) the chain is Extracellular. Residues 127–138 (FTSAFLFSIEVQ) constitute an intramembrane region (helical; Pore-forming). An intramembrane region (pore-forming) is located at residues 139–145 (VTIGFGG). The Selectivity filter motif lies at 140 to 145 (TIGFGG). Residues 146-154 (RMMTEECPL) lie on the Extracellular side of the membrane. A helical membrane pass occupies residues 155 to 176 (AITVLILQNIVGLIINAVMLGC). Over 177 to 424 (IFMKTAQAHR…PEGNQCPSES (248 aa)) the chain is Cytoplasmic. The tract at residues 373–409 (ELSHQNSLRKRNSMRRNNSMRRNNSIRRNNSSLMVPK) is disordered. Positions 387-404 (RRNNSMRRNNSIRRNNSS) are enriched in low complexity.

This sequence belongs to the inward rectifier-type potassium channel (TC 1.A.2.1) family. KCNJ8 subfamily. Interacts with ABCC9.

The protein resides in the membrane. The enzyme catalyses K(+)(in) = K(+)(out). In terms of biological role, inward rectifier potassium channels are characterized by a greater tendency to allow potassium to flow into the cell rather than out of it. Their voltage dependence is regulated by the concentration of extracellular potassium; as external potassium is raised, the voltage range of the channel opening shifts to more positive voltages. The inward rectification is mainly due to the blockage of outward current by internal magnesium. This channel is activated by internal ATP and can be blocked by external barium. Can form a sulfonylurea-sensitive but ATP-insensitive potassium channel with ABCC9. This Mus musculus (Mouse) protein is ATP-sensitive inward rectifier potassium channel 8 (Kcnj8).